The following is a 160-amino-acid chain: Ureidoglycolate lyase (160 aa).

This sequence belongs to the ureidoglycolate lyase family. As to quaternary structure, homodimer. Requires Ni(2+) as cofactor.

It catalyses the reaction (S)-ureidoglycolate = urea + glyoxylate. Its pathway is nitrogen metabolism; (S)-allantoin degradation. Functionally, catalyzes the catabolism of the allantoin degradation intermediate (S)-ureidoglycolate, generating urea and glyoxylate. Involved in the anaerobic utilization of allantoin as sole nitrogen source. Reinforces the induction of genes involved in the degradation of allantoin and glyoxylate by producing glyoxylate. The polypeptide is Ureidoglycolate lyase (Escherichia coli O6:H1 (strain CFT073 / ATCC 700928 / UPEC)).